A 203-amino-acid polypeptide reads, in one-letter code: Outer-membrane lipoprotein carrier protein (203 aa).

The N-terminal stretch at 1–21 is a signal peptide; the sequence is MKKLLVACCLLSGLISAHALA.

Belongs to the LolA family. Monomer.

It localises to the periplasm. Its function is as follows. Participates in the translocation of lipoproteins from the inner membrane to the outer membrane. Only forms a complex with a lipoprotein if the residue after the N-terminal Cys is not an aspartate (The Asp acts as a targeting signal to indicate that the lipoprotein should stay in the inner membrane). This chain is Outer-membrane lipoprotein carrier protein, found in Yersinia enterocolitica serotype O:8 / biotype 1B (strain NCTC 13174 / 8081).